The following is a 253-amino-acid chain: MRFDFFVSKRLNISRNKALELIENEEVLLNGKSFKASFDVKNFLENLKKTQDLNPEDILLTDGLKLDLLSEIYVSRAALKLKNFLEENGIEIKHKNCLDIGSSTGGFVQILLENQALKITALDVGNNQLHLSLRTNEKIILHENTDLRTFKSEEKFELITCDVSFISLINLLYYIDNLALKEIILLFKPQFEVGKNIKRDKKGVLKDDKAILKARMDFEKACAKLGWLLKNTQKSSIKGKEGNVEYFYYYIKN.

The region spanning 1–73 (MRFDFFVSKR…LKLDLLSEIY (73 aa)) is the S4 RNA-binding domain.

This sequence belongs to the TlyA family.

It carries out the reaction cytidine(1920) in 23S rRNA + S-adenosyl-L-methionine = 2'-O-methylcytidine(1920) in 23S rRNA + S-adenosyl-L-homocysteine + H(+). Catalyzes the 2'-O-methylation at nucleotide C1920 in 23S rRNA. Enhances motility. Enhances biofilm formation. Involved in the assembly of 70S ribosomes. Involved in virulence by promoting adherence and invasion to host cells. Involved in pathogenicity by modulating secretion of host-protective chemokine interleukin 8 (IL-8). Involved in susceptibility to antibiotic capreomycin. The chain is 23S rRNA (cytidine-2'-O)-methyltransferase TlyA from Campylobacter jejuni subsp. jejuni serotype O:23/36 (strain 81-176).